A 92-amino-acid chain; its full sequence is YcgL domain-containing protein Shewana3_2381 (92 aa).

The region spanning 1 to 85 (MLCAVYKSSR…PQVNLLAEHR (85 aa)) is the YcgL domain.

This chain is YcgL domain-containing protein Shewana3_2381, found in Shewanella sp. (strain ANA-3).